We begin with the raw amino-acid sequence, 250 residues long: 2,3-bisphosphoglycerate-dependent phosphoglycerate mutase (250 aa).

Substrate contacts are provided by residues 10-17 (RHGESQWN), 23-24 (TG), Arg-62, 89-92 (ERHY), Lys-100, 116-117 (RR), and 185-186 (GN). The active-site Tele-phosphohistidine intermediate is the His-11. The active-site Proton donor/acceptor is Glu-89.

Belongs to the phosphoglycerate mutase family. BPG-dependent PGAM subfamily. Homodimer.

The catalysed reaction is (2R)-2-phosphoglycerate = (2R)-3-phosphoglycerate. It functions in the pathway carbohydrate degradation; glycolysis; pyruvate from D-glyceraldehyde 3-phosphate: step 3/5. Functionally, catalyzes the interconversion of 2-phosphoglycerate and 3-phosphoglycerate. This Klebsiella pneumoniae (strain 342) protein is 2,3-bisphosphoglycerate-dependent phosphoglycerate mutase.